The following is a 739-amino-acid chain: Tegument protein UL47 (739 aa).

The span at 1–13 (MDAARDGRPERRR) shows a compositional bias: basic and acidic residues. 2 disordered regions span residues 1–123 (MDAA…QDYL) and 154–198 (QFPP…DDAA). Residues 10 to 30 (ERRRAVSGTYRTHPFQRPSAR) carry the Nuclear localization signal motif. Basic residues predominate over residues 28–53 (SARRSAGRPARCGRRGRGAPRVRRPR). Residues 62-87 (EDTSEDENVYDYIDGDSSDSADDYDS) show a composition bias toward acidic residues. Positions 94–121 (RGPNHGAGDAMDTDAPPERAPEGGAPQD) match the Nuclear export signal motif. The short motif at 483–493 (LSAYLTLFVAL) is the Nuclear export signal element.

The protein belongs to the alphaherpesvirinae HHV-1 UL47 family. In terms of assembly, interacts with US3 kinase. Interacts with UL31 and UL34; these interactions seem important for efficient virion nuclear egress. Interacts with UL41/VHS. Interacts with host DDB1. Post-translationally, monoubiquitinated. In terms of processing, phosphorylated by US3. This phosphorylation is required for proper nuclear localization.

The protein resides in the virion tegument. The protein localises to the host nucleus. Its subcellular location is the host cytoplasm. Tegument protein that can bind to various RNA transcripts. Plays a role in the attenuation of selective viral and cellular mRNA degradation by modulating the activity of host shutoff RNase UL41/VHS. Also plays a role in the primary envelopment of virions in the perinuclear space, probably by interacting with two nuclear egress proteins UL31 and UL34. This chain is Tegument protein UL47, found in Bovine herpesvirus 1.1 (strain Cooper) (BoHV-1).